Here is a 121-residue protein sequence, read N- to C-terminus: Small ribosomal subunit protein uS11 (121 aa).

The protein belongs to the universal ribosomal protein uS11 family. In terms of assembly, part of the 30S ribosomal subunit. Interacts with proteins S7 and S18. Binds to IF-3.

Its function is as follows. Located on the platform of the 30S subunit, it bridges several disparate RNA helices of the 16S rRNA. Forms part of the Shine-Dalgarno cleft in the 70S ribosome. This is Small ribosomal subunit protein uS11 from Mycoplasma genitalium (strain ATCC 33530 / DSM 19775 / NCTC 10195 / G37) (Mycoplasmoides genitalium).